We begin with the raw amino-acid sequence, 260 residues long: Imidazole glycerol phosphate synthase subunit HisF (260 aa).

Active-site residues include Asp-11 and Asp-130.

The protein belongs to the HisA/HisF family. In terms of assembly, heterodimer of HisH and HisF.

It is found in the cytoplasm. The enzyme catalyses 5-[(5-phospho-1-deoxy-D-ribulos-1-ylimino)methylamino]-1-(5-phospho-beta-D-ribosyl)imidazole-4-carboxamide + L-glutamine = D-erythro-1-(imidazol-4-yl)glycerol 3-phosphate + 5-amino-1-(5-phospho-beta-D-ribosyl)imidazole-4-carboxamide + L-glutamate + H(+). Its pathway is amino-acid biosynthesis; L-histidine biosynthesis; L-histidine from 5-phospho-alpha-D-ribose 1-diphosphate: step 5/9. Its function is as follows. IGPS catalyzes the conversion of PRFAR and glutamine to IGP, AICAR and glutamate. The HisF subunit catalyzes the cyclization activity that produces IGP and AICAR from PRFAR using the ammonia provided by the HisH subunit. The polypeptide is Imidazole glycerol phosphate synthase subunit HisF (Endomicrobium trichonymphae).